A 308-amino-acid chain; its full sequence is GATA transcription factor 9 (308 aa).

The segment at 34–57 (DDGLNTLPDSSTLSTGTLTDSSNS) is disordered. Residues 39–57 (TLPDSSTLSTGTLTDSSNS) are compositionally biased toward low complexity. Positions 142 to 149 (KARSKRSR) match the Nuclear localization signal motif. Residues 193–247 (SGGGRRCLHCATEKTPQWRTGPMGPKTLCNACGVRYKSGRLVPEYRPASSPTFVM) form a GATA-type zinc finger.

This sequence belongs to the type IV zinc-finger family. Class A subfamily.

The protein resides in the nucleus. Functionally, transcriptional activator that specifically binds 5'-GATA-3' or 5'-GAT-3' motifs within gene promoters. May be involved in the regulation of some light-responsive genes. The chain is GATA transcription factor 9 (GATA9) from Arabidopsis thaliana (Mouse-ear cress).